The following is a 146-amino-acid chain: Ribosome maturation factor RimP (146 aa).

It belongs to the RimP family.

Its subcellular location is the cytoplasm. Its function is as follows. Required for maturation of 30S ribosomal subunits. This chain is Ribosome maturation factor RimP, found in Helicobacter pylori (strain J99 / ATCC 700824) (Campylobacter pylori J99).